The chain runs to 156 residues: Small ribosomal subunit protein uS7 (156 aa).

Belongs to the universal ribosomal protein uS7 family. In terms of assembly, part of the 30S ribosomal subunit. Contacts proteins S9 and S11.

Its function is as follows. One of the primary rRNA binding proteins, it binds directly to 16S rRNA where it nucleates assembly of the head domain of the 30S subunit. Is located at the subunit interface close to the decoding center, probably blocks exit of the E-site tRNA. The sequence is that of Small ribosomal subunit protein uS7 from Maridesulfovibrio salexigens (strain ATCC 14822 / DSM 2638 / NCIMB 8403 / VKM B-1763) (Desulfovibrio salexigens).